A 350-amino-acid chain; its full sequence is Heat-inducible transcription repressor HrcA (350 aa).

This sequence belongs to the HrcA family.

Negative regulator of class I heat shock genes (grpE-dnaK-dnaJ and groELS operons). Prevents heat-shock induction of these operons. The protein is Heat-inducible transcription repressor HrcA of Xanthomonas campestris pv. campestris (strain ATCC 33913 / DSM 3586 / NCPPB 528 / LMG 568 / P 25).